The chain runs to 258 residues: MRLLISNDDGVFALGIQTLANRLVQAGHEVTVVCPDRERSATGHGLTLHKPIRAERIEGLFDPAVQVWACSGTPSDCVKLALGTLLPELPDFVLSGINHGPNLGTDVLYSGTVSAAMEGVIEGIPSIALSLASFTARDFEPAAEIAVELLERLPHPSSPKVLLSVNIPPVPKEEIAGIRLTRQGVRRYVDLFDQRVDPRGKPYFWLAGEVVEESEPQEPADSHWCDVDAIRRNYVTVTPLQYDLTHYNSLSQLDHLSR.

A divalent metal cation is bound by residues D8, D9, S40, and N98.

The protein belongs to the SurE nucleotidase family. Requires a divalent metal cation as cofactor.

It is found in the cytoplasm. The enzyme catalyses a ribonucleoside 5'-phosphate + H2O = a ribonucleoside + phosphate. In terms of biological role, nucleotidase that shows phosphatase activity on nucleoside 5'-monophosphates. In Synechococcus elongatus (strain ATCC 33912 / PCC 7942 / FACHB-805) (Anacystis nidulans R2), this protein is 5'-nucleotidase SurE.